The sequence spans 110 residues: MQALAKHKFASGSAQKARLVADQIRGLPVDRALEILAYSPKKAAVLVKKVLESAIANAEHNEGADIDELRITTIFVDDGPTMKRIMPRAKGRADRILKRTSHITVMVSDS.

Belongs to the universal ribosomal protein uL22 family. Part of the 50S ribosomal subunit.

Its function is as follows. This protein binds specifically to 23S rRNA; its binding is stimulated by other ribosomal proteins, e.g. L4, L17, and L20. It is important during the early stages of 50S assembly. It makes multiple contacts with different domains of the 23S rRNA in the assembled 50S subunit and ribosome. In terms of biological role, the globular domain of the protein is located near the polypeptide exit tunnel on the outside of the subunit, while an extended beta-hairpin is found that lines the wall of the exit tunnel in the center of the 70S ribosome. The polypeptide is Large ribosomal subunit protein uL22 (Pseudoalteromonas translucida (strain TAC 125)).